The sequence spans 672 residues: Poly-beta-1,6-N-acetyl-D-glucosamine N-deacetylase (672 aa).

The first 20 residues, 1–20 (MLRNGNKYLLMLVSIIMLTA), serve as a signal peptide directing secretion. Cysteine 21 is lipidated: N-palmitoyl cysteine. Cysteine 21 carries S-diacylglycerol cysteine lipidation. One can recognise a NodB homology domain in the interval 107–349 (KAVVLTFDDG…IQRVKDMQIS (243 aa)).

This sequence belongs to the polysaccharide deacetylase family.

The protein resides in the cell outer membrane. In terms of biological role, catalyzes the N-deacetylation of poly-beta-1,6-N-acetyl-D-glucosamine (PGA), a biofilm adhesin polysaccharide. N-deacetylation promotes PGA export through the PgaA porin. The chain is Poly-beta-1,6-N-acetyl-D-glucosamine N-deacetylase (pgaB) from Escherichia coli O157:H7.